The following is a 372-amino-acid chain: Glutamate 5-kinase (372 aa).

Lys-14 contributes to the ATP binding site. Substrate-binding residues include Ser-54, Asp-141, and Asn-153. An ATP-binding site is contributed by 173–174; that stretch reads TD. The 79-residue stretch at 280–358 folds into the PUA domain; sequence AGAVVLDNGA…ADIAAILGFV (79 aa).

Belongs to the glutamate 5-kinase family.

It localises to the cytoplasm. The catalysed reaction is L-glutamate + ATP = L-glutamyl 5-phosphate + ADP. It participates in amino-acid biosynthesis; L-proline biosynthesis; L-glutamate 5-semialdehyde from L-glutamate: step 1/2. Functionally, catalyzes the transfer of a phosphate group to glutamate to form L-glutamate 5-phosphate. The protein is Glutamate 5-kinase of Janthinobacterium sp. (strain Marseille) (Minibacterium massiliensis).